The primary structure comprises 464 residues: Na(+)/H(+) antiporter NhaA (464 aa).

12 helical membrane-spanning segments follow: residues 37–57 (GSGI…NTSC), 82–102 (IHYW…GLEI), 118–138 (VLPI…YFSF), 145–165 (VSGW…ILLL), 176–196 (AVLV…IAIF), 200–220 (NLAW…LLLN), 226–246 (ALWA…FSGV), 248–268 (ATVA…YSPT), 321–341 (ILNT…NAGV), 360–380 (VFFG…MICV), 396–416 (VLGI…VSEL), and 430–450 (ITIL…LRFI).

It belongs to the NhaA Na(+)/H(+) (TC 2.A.33) antiporter family.

It localises to the cell inner membrane. The enzyme catalyses Na(+)(in) + 2 H(+)(out) = Na(+)(out) + 2 H(+)(in). Functionally, na(+)/H(+) antiporter that extrudes sodium in exchange for external protons. The polypeptide is Na(+)/H(+) antiporter NhaA (Dichelobacter nodosus (strain VCS1703A)).